The primary structure comprises 422 residues: MKNISTKESFFKFKFNNRSLYCWGAFMKLRMKPEDFIVEEIIDFNKIAGDRCYLYKLTKRNIESLKAFSYIAKKFKIPLKDIGYCGLKDRHALTTQYISIPKKYGKLSLDEPNLKLELIGESKFLLLGDLEGNRFTITVRGLKKEDIPKIKENLKYLEFGAPNYFDSQRFGSVFDKKFIAKEVIKGNYEEAVKILLTKYKKSEKKLIKDLKRFIDKNWGDWDKIWEYIKENNIKSRLYVNMVKELKKSNDYKKALSYVDDRLKKIFVAAYQSYLWNECVKELLRKYVPEEDRVYYEYECGTLMFYKKMDEEVFNILKDKKFPTIAPDIEYSGEEKEIIEEILKREGLTMEELNNIGELGKFIYSERKILSIPKNLKIGEFEEDELNKGKYKITLSYELEKGSYATIIIKRAFLGVKTKKRKR.

The Nucleophile role is filled by D89. The 212-residue stretch at 160–371 (GAPNYFDSQR…IYSERKILSI (212 aa)) folds into the TRUD domain.

It belongs to the pseudouridine synthase TruD family.

It carries out the reaction uridine(13) in tRNA = pseudouridine(13) in tRNA. In terms of biological role, could be responsible for synthesis of pseudouridine from uracil-13 in transfer RNAs. The chain is Probable tRNA pseudouridine synthase D 2 from Methanocaldococcus jannaschii (strain ATCC 43067 / DSM 2661 / JAL-1 / JCM 10045 / NBRC 100440) (Methanococcus jannaschii).